A 296-amino-acid chain; its full sequence is SPbeta prophage-derived endonuclease YokF (296 aa).

Positions 1–19 (MKKVLLGFAAFTLSLSLAA) are cleaved as a signal peptide. The N-palmitoyl cysteine moiety is linked to residue Cys-20. Cys-20 carries the S-diacylglycerol cysteine lipid modification. The tract at residues 20–65 (CSSNDSEKVSTEKETPQASTDVEKKTEQKESTKEKTADKSKEKDKK) is disordered. Residues 24 to 65 (DSEKVSTEKETPQASTDVEKKTEQKESTKEKTADKSKEKDKK) are compositionally biased toward basic and acidic residues. Residues 66 to 199 (ELVDVTLDRA…KSEKLSIWSK (134 aa)) enclose the TNase-like domain. Position 79 (Asp-79) interacts with Ca(2+). Arg-93 is a catalytic residue. Asp-98 and Thr-99 together coordinate Ca(2+). Active-site residues include Glu-101 and Arg-144. The segment at 218 to 296 (AVKKATTSKP…RDHDNYACER (79 aa)) is disordered. A compositionally biased stretch (low complexity) spans 219–244 (VKKATTSKPAATQPTTPKASSETSTT). Residues 284–296 (KMDRDHDNYACER) are compositionally biased toward basic and acidic residues.

It depends on Ca(2+) as a cofactor. The cofactor is Cu(2+). Mn(2+) is required as a cofactor.

It localises to the cell membrane. With respect to regulation, inhibited by aurintricalboxylic acid but not by Zn(2+), Mn(2+), Hg(2+), 2-mercaptoethanol and sodium citrate. Neither inhibited nor activated by ATP. Catalyzes the hydrolysis of supercoiled double and single strand DNA and RNA. Involved in chromosomal DNA degradation and cell death caused by thermal stress. The chain is SPbeta prophage-derived endonuclease YokF (yokF) from Bacillus subtilis (strain 168).